A 190-amino-acid polypeptide reads, in one-letter code: dCTP deaminase (190 aa).

K113–R118 is a binding site for dCTP. E139 (proton donor/acceptor) is an active-site residue. DCTP contacts are provided by Q158, Y172, K181, and Q182.

Belongs to the dCTP deaminase family. In terms of assembly, homotrimer.

The enzyme catalyses dCTP + H2O + H(+) = dUTP + NH4(+). It functions in the pathway pyrimidine metabolism; dUMP biosynthesis; dUMP from dCTP (dUTP route): step 1/2. Its function is as follows. Catalyzes the deamination of dCTP to dUTP. In Chlamydia muridarum (strain MoPn / Nigg), this protein is dCTP deaminase.